The sequence spans 604 residues: Netrin-1 (604 aa).

The signal sequence occupies residues Met-1–Gly-24. The Laminin N-terminal domain occupies His-47–Arg-284. Asn-95, Asn-116, and Asn-131 each carry an N-linked (GlcNAc...) asparagine glycan. Disulfide bonds link Cys-119-Cys-152, Cys-285-Cys-294, Cys-287-Cys-304, Cys-306-Cys-315, Cys-318-Cys-338, Cys-341-Cys-350, Cys-343-Cys-368, Cys-371-Cys-380, Cys-383-Cys-401, Cys-404-Cys-416, Cys-406-Cys-423, Cys-425-Cys-434, Cys-437-Cys-451, Cys-472-Xaa-544, and Cys-491-Cys-601. Laminin EGF-like domains are found at residues Cys-285–Ala-340, Cys-341–Ala-403, and Cys-404–Lys-453. Asn-417 is a glycosylation site (N-linked (GlcNAc...) asparagine). The region spanning Cys-472–Cys-601 is the NTR domain. The Cell attachment site signature appears at Arg-530–Asp-532.

In terms of assembly, binds to its receptors; DCC, UNC5A, UNC5B, UNC5C and probably UNC5D. Binds to its receptor; DSCAM. Interacts with APP.

It is found in the secreted. Its subcellular location is the cytoplasm. Its function is as follows. Netrins control guidance of CNS commissural axons and peripheral motor axons. Its association with either DCC or some UNC5 receptors will lead to axon attraction or repulsion, respectively. Binding to UNC5C might cause dissociation of UNC5C from polymerized TUBB3 in microtubules and thereby lead to increased microtubule dynamics and axon repulsion. Involved in dorsal root ganglion axon projection towards the spinal cord. It also serves as a survival factor via its association with its receptors which prevent the initiation of apoptosis. Involved in colorectal tumorigenesis by regulating apoptosis. This chain is Netrin-1 (Ntn1), found in Rattus norvegicus (Rat).